The sequence spans 385 residues: Calcium/calmodulin-dependent protein kinase type 1D (385 aa).

In terms of domain architecture, Protein kinase spans 23–279 (FEFKETLGTG…CEQAARHPWI (257 aa)). ATP is bound by residues 29–37 (LGTGAFSEV) and Lys-52. Residue Lys-113 forms a Glycyl lysine isopeptide (Lys-Gly) (interchain with G-Cter in SUMO2) linkage. Ser-122 carries the post-translational modification Phosphoserine. Asp-144 (proton acceptor) is an active-site residue. Thr-180 is subject to Phosphothreonine; by CaMKK1 and CaMKK2. The tract at residues 279–319 (IAGDTALNKNIHESVSAQIRKNFAKSKWRQAFNATAVVRHM) is autoinhibitory domain. The tract at residues 299-320 (KNFAKSKWRQAFNATAVVRHMR) is calmodulin-binding. The Nuclear export signal motif lies at 318–324 (HMRKLHL). The segment at 360–385 (SSGVSGVGAERRPRPTTVTAVHSGSK) is disordered. The segment covering 375-385 (TTVTAVHSGSK) has biased composition (polar residues).

It belongs to the protein kinase superfamily. CAMK Ser/Thr protein kinase family. CaMK subfamily. Widely expressed. Highly and mostly expressed in polymorphonuclear leukocytes (neutrophilic and eosinophilic granulocytes) while little or no expression is observed in monocytes and lymphocytes.

It localises to the cytoplasm. The protein resides in the nucleus. It carries out the reaction L-seryl-[protein] + ATP = O-phospho-L-seryl-[protein] + ADP + H(+). The enzyme catalyses L-threonyl-[protein] + ATP = O-phospho-L-threonyl-[protein] + ADP + H(+). Activated by Ca(2+)/calmodulin. Binding of calmodulin results in conformational change that relieves intrasteric autoinhibition and allows phosphorylation of Thr-180 within the activation loop by CaMKK1 or CaMKK2. Phosphorylation of Thr-180 results in several fold increase in total activity. Unlike CaMK4, may be unable to exhibit autonomous activity after Ca(2+)/calmodulin activation. Its function is as follows. Calcium/calmodulin-dependent protein kinase that operates in the calcium-triggered CaMKK-CaMK1 signaling cascade and, upon calcium influx, activates CREB-dependent gene transcription, regulates calcium-mediated granulocyte function and respiratory burst and promotes basal dendritic growth of hippocampal neurons. In neutrophil cells, required for cytokine-induced proliferative responses and activation of the respiratory burst. Activates the transcription factor CREB1 in hippocampal neuron nuclei. May play a role in apoptosis of erythroleukemia cells. In vitro, phosphorylates transcription factor CREM isoform Beta. This Homo sapiens (Human) protein is Calcium/calmodulin-dependent protein kinase type 1D (CAMK1D).